The chain runs to 204 residues: ATP phosphoribosyltransferase (204 aa).

It belongs to the ATP phosphoribosyltransferase family. Short subfamily. As to quaternary structure, heteromultimer composed of HisG and HisZ subunits.

It localises to the cytoplasm. The enzyme catalyses 1-(5-phospho-beta-D-ribosyl)-ATP + diphosphate = 5-phospho-alpha-D-ribose 1-diphosphate + ATP. It functions in the pathway amino-acid biosynthesis; L-histidine biosynthesis; L-histidine from 5-phospho-alpha-D-ribose 1-diphosphate: step 1/9. Its function is as follows. Catalyzes the condensation of ATP and 5-phosphoribose 1-diphosphate to form N'-(5'-phosphoribosyl)-ATP (PR-ATP). Has a crucial role in the pathway because the rate of histidine biosynthesis seems to be controlled primarily by regulation of HisG enzymatic activity. This is ATP phosphoribosyltransferase from Staphylococcus aureus (strain MRSA252).